The sequence spans 449 residues: Tubulin beta-6 chain (449 aa).

GTP is bound by residues Q11, E69, S138, G142, T143, G144, N204, and N226. Residue E69 coordinates Mg(2+). The disordered stretch occupies residues 425–449 (YQDATADDEGEYEEDEDEEEILDHE). A compositionally biased stretch (acidic residues) spans 429 to 449 (TADDEGEYEEDEDEEEILDHE).

Belongs to the tubulin family. In terms of assembly, dimer of alpha and beta chains. A typical microtubule is a hollow water-filled tube with an outer diameter of 25 nm and an inner diameter of 15 nM. Alpha-beta heterodimers associate head-to-tail to form protofilaments running lengthwise along the microtubule wall with the beta-tubulin subunit facing the microtubule plus end conferring a structural polarity. Microtubules usually have 13 protofilaments but different protofilament numbers can be found in some organisms and specialized cells. Mg(2+) serves as cofactor.

It is found in the cytoplasm. It localises to the cytoskeleton. Its function is as follows. Tubulin is the major constituent of microtubules, a cylinder consisting of laterally associated linear protofilaments composed of alpha- and beta-tubulin heterodimers. Microtubules grow by the addition of GTP-tubulin dimers to the microtubule end, where a stabilizing cap forms. Below the cap, tubulin dimers are in GDP-bound state, owing to GTPase activity of alpha-tubulin. The sequence is that of Tubulin beta-6 chain (TUBB6) from Arabidopsis thaliana (Mouse-ear cress).